A 114-amino-acid polypeptide reads, in one-letter code: Transcription factor S1 (114 aa).

An N-ZR region spans residues 1–43 (MIVVKFCPKCNSMMVPKKSNGKNVYRCTKCGYEKEVPETTIVV). Cys-7, Cys-10, Cys-27, Cys-30, Cys-75, and Cys-78 together coordinate Zn(2+). Residues 63-114 (MPSGAQKIKGVLCPSCKNDEAYFWILQTRRADEPPTRFYKCTKCGKVWREYE) form a C-ZR region. A TFIIS-type zinc finger spans residues 71–111 (KGVLCPSCKNDEAYFWILQTRRADEPPTRFYKCTKCGKVWR). Active-site residues include Asp-94 and Glu-95. The Zn(2+) site is built by Cys-103 and Cys-106.

It belongs to the archaeal RpoM/eukaryotic RPA12/RPB9/RPC11 RNA polymerase family. Interacts with RNA polymerase; probably competes with TFS4 for the same binding site. Zn(2+) serves as cofactor.

In terms of biological role, induces RNA cleavage activity in the RNA polymerase. Induces rapid cleavage of a stalled transcription elongation complex with a 2-nucleotide reduction at the 3' end of the nascent RNA. Truncated RNA is able to resume elongation. During transcription elongation it enhances processivity. Involved in transcriptional proofreading and fidelity. Misincorporation of nucleotides during elongation of transcription leads to arrested elongation complexes which are rescued by TFS-promoted removal of a dinucleotide from the 3'-end. TFS1 is able to induce a cleavage resynthesis cycle in stalled elongation complexes (resulting from the next missing nucleotide or a reduced incorporation rate of a wrong nucleotide) preventing misincorporation and enabling proofreading in a post-incorporation manner. Pausing of elongation complexes is the main determinant of TFS-induced RNA cleavage. The protein is Transcription factor S1 of Saccharolobus solfataricus (strain ATCC 35092 / DSM 1617 / JCM 11322 / P2) (Sulfolobus solfataricus).